A 535-amino-acid polypeptide reads, in one-letter code: Berberine bridge enzyme-like 27 (535 aa).

The N-terminal stretch at 1 to 22 is a signal peptide; it reads MEILRFLLSLFIYFLLLNLSLS. Asn18 and Asn66 each carry an N-linked (GlcNAc...) asparagine glycan. Residues Cys40 and Cys100 are joined by a disulfide bond. The region spanning 78 to 253 is the FAD-binding PCMH-type domain; sequence ETPKPVSIIT…LSWKIRLLDV (176 aa). Pros-8alpha-FAD histidine is present on His115. Residues Asn146, Asn215, and Asn439 are each glycosylated (N-linked (GlcNAc...) asparagine).

This sequence belongs to the oxygen-dependent FAD-linked oxidoreductase family. It depends on FAD as a cofactor. In terms of tissue distribution, accumulates in cell walls of etiolated hypocotyls.

It localises to the secreted. It is found in the cell wall. The chain is Berberine bridge enzyme-like 27 from Arabidopsis thaliana (Mouse-ear cress).